A 288-amino-acid chain; its full sequence is Acetyl-coenzyme A carboxylase carboxyl transferase subunit beta (288 aa).

The CoA carboxyltransferase N-terminal domain maps to 32-288; that stretch reads LFAKCPACKH…LELHTEVENV (257 aa). Residues Cys-36, Cys-39, Cys-54, and Cys-57 each coordinate Zn(2+). A C4-type zinc finger spans residues 36–57; the sequence is CPACKHTIYQKDLGKNKVCPNC.

This sequence belongs to the AccD/PCCB family. Acetyl-CoA carboxylase is a heterohexamer composed of biotin carboxyl carrier protein (AccB), biotin carboxylase (AccC) and two subunits each of ACCase subunit alpha (AccA) and ACCase subunit beta (AccD). Requires Zn(2+) as cofactor.

It localises to the cytoplasm. The catalysed reaction is N(6)-carboxybiotinyl-L-lysyl-[protein] + acetyl-CoA = N(6)-biotinyl-L-lysyl-[protein] + malonyl-CoA. The protein operates within lipid metabolism; malonyl-CoA biosynthesis; malonyl-CoA from acetyl-CoA: step 1/1. Functionally, component of the acetyl coenzyme A carboxylase (ACC) complex. Biotin carboxylase (BC) catalyzes the carboxylation of biotin on its carrier protein (BCCP) and then the CO(2) group is transferred by the transcarboxylase to acetyl-CoA to form malonyl-CoA. The chain is Acetyl-coenzyme A carboxylase carboxyl transferase subunit beta from Lactococcus lactis subsp. cremoris (strain MG1363).